The sequence spans 114 residues: Fluoride-specific ion channel FluC 1 (114 aa).

A run of 3 helical transmembrane segments spans residues 23–43 (ATLT…SYVF), 52–72 (LSTA…TLSV), and 84–104 (FLAM…SHLG). Na(+) is bound by residues G62 and T65.

Belongs to the fluoride channel Fluc/FEX (TC 1.A.43) family.

It is found in the cell membrane. It catalyses the reaction fluoride(in) = fluoride(out). With respect to regulation, na(+) is not transported, but it plays an essential structural role and its presence is essential for fluoride channel function. Functionally, fluoride-specific ion channel. Important for reducing fluoride concentration in the cell, thus reducing its toxicity. The sequence is that of Fluoride-specific ion channel FluC 1 from Desulfitobacterium hafniense (strain Y51).